A 223-amino-acid chain; its full sequence is 2-C-methyl-D-erythritol 4-phosphate cytidylyltransferase (223 aa).

The protein belongs to the IspD/TarI cytidylyltransferase family. IspD subfamily.

The catalysed reaction is 2-C-methyl-D-erythritol 4-phosphate + CTP + H(+) = 4-CDP-2-C-methyl-D-erythritol + diphosphate. It participates in isoprenoid biosynthesis; isopentenyl diphosphate biosynthesis via DXP pathway; isopentenyl diphosphate from 1-deoxy-D-xylulose 5-phosphate: step 2/6. Functionally, catalyzes the formation of 4-diphosphocytidyl-2-C-methyl-D-erythritol from CTP and 2-C-methyl-D-erythritol 4-phosphate (MEP). The chain is 2-C-methyl-D-erythritol 4-phosphate cytidylyltransferase from Synechococcus sp. (strain WH7803).